A 71-amino-acid chain; its full sequence is Small ribosomal subunit protein bS21 (71 aa).

Belongs to the bacterial ribosomal protein bS21 family.

The polypeptide is Small ribosomal subunit protein bS21 (Alcanivorax borkumensis (strain ATCC 700651 / DSM 11573 / NCIMB 13689 / SK2)).